The sequence spans 332 residues: L-lactate dehydrogenase A chain (332 aa).

NAD(+)-binding positions include 29–57 (GAVGMACAISILMKDLADELALVDVVEDK) and R99. Substrate is bound by residues R106, N138, and R169. An NAD(+)-binding site is contributed by N138. H193 functions as the Proton acceptor in the catalytic mechanism. Residue T248 participates in substrate binding.

This sequence belongs to the LDH/MDH superfamily. LDH family. In terms of assembly, homotetramer.

It is found in the cytoplasm. It carries out the reaction (S)-lactate + NAD(+) = pyruvate + NADH + H(+). It functions in the pathway fermentation; pyruvate fermentation to lactate; (S)-lactate from pyruvate: step 1/1. Interconverts simultaneously and stereospecifically pyruvate and lactate with concomitant interconversion of NADH and NAD(+). The sequence is that of L-lactate dehydrogenase A chain (LDHA) from Alligator mississippiensis (American alligator).